A 222-amino-acid polypeptide reads, in one-letter code: Putative auxin response factor 23 (222 aa).

Positions 126–222 (FTKVLTASDT…ETGELRVGIR (97 aa)) form a DNA-binding region, TF-B3.

It belongs to the ARF family. As to quaternary structure, homo and heterodimers.

It is found in the nucleus. In terms of biological role, auxin response factors (ARFs) are transcriptional factors that binds specifically to the DNA sequence 5'-TGTCTC-3' found in the auxin-responsive promoter elements (AuxREs). Could act as transcriptional activator or repressor. Formation of heterodimers with Aux/IAA proteins may alter their ability to modulate early auxin response genes expression. This Arabidopsis thaliana (Mouse-ear cress) protein is Putative auxin response factor 23 (ARF23).